The chain runs to 219 residues: ATP synthase F(0) complex subunit a (219 aa).

The next 6 helical transmembrane spans lie at 4 to 24 (PTYL…ILFP), 61 to 81 (WAAL…LGLL), 90 to 110 (QLSL…IIGM), 124 to 144 (EGTP…SLFI), 172 to 192 (FVLL…LFLL), and 194 to 214 (LLEI…LSLY).

Belongs to the ATPase A chain family. As to quaternary structure, component of the ATP synthase complex composed at least of ATP5F1A/subunit alpha, ATP5F1B/subunit beta, ATP5MC1/subunit c (homooctomer), MT-ATP6/subunit a, MT-ATP8/subunit 8, ATP5ME/subunit e, ATP5MF/subunit f, ATP5MG/subunit g, ATP5MK/subunit k, ATP5MJ/subunit j, ATP5F1C/subunit gamma, ATP5F1D/subunit delta, ATP5F1E/subunit epsilon, ATP5PF/subunit F6, ATP5PB/subunit b, ATP5PD/subunit d, ATP5PO/subunit OSCP. ATP synthase complex consists of a soluble F(1) head domain (subunits alpha(3) and beta(3)) - the catalytic core - and a membrane F(0) domain - the membrane proton channel (subunits c, a, 8, e, f, g, k and j). These two domains are linked by a central stalk (subunits gamma, delta, and epsilon) rotating inside the F1 region and a stationary peripheral stalk (subunits F6, b, d, and OSCP). Interacts with DNAJC30; interaction is direct.

The protein resides in the mitochondrion inner membrane. It catalyses the reaction H(+)(in) = H(+)(out). Functionally, subunit a, of the mitochondrial membrane ATP synthase complex (F(1)F(0) ATP synthase or Complex V) that produces ATP from ADP in the presence of a proton gradient across the membrane which is generated by electron transport complexes of the respiratory chain. ATP synthase complex consist of a soluble F(1) head domain - the catalytic core - and a membrane F(1) domain - the membrane proton channel. These two domains are linked by a central stalk rotating inside the F(1) region and a stationary peripheral stalk. During catalysis, ATP synthesis in the catalytic domain of F(1) is coupled via a rotary mechanism of the central stalk subunits to proton translocation. With the subunit c (ATP5MC1), forms the proton-conducting channel in the F(0) domain, that contains two crucial half-channels (inlet and outlet) that facilitate proton movement from the mitochondrial intermembrane space (IMS) into the matrix. Protons are taken up via the inlet half-channel and released through the outlet half-channel, following a Grotthuss mechanism. This Oncorhynchus masou (Cherry salmon) protein is ATP synthase F(0) complex subunit a.